The following is a 1072-amino-acid chain: DNA-directed RNA polymerase subunit beta (1072 aa).

It belongs to the RNA polymerase beta chain family. As to quaternary structure, in plastids the minimal PEP RNA polymerase catalytic core is composed of four subunits: alpha, beta, beta', and beta''. When a (nuclear-encoded) sigma factor is associated with the core the holoenzyme is formed, which can initiate transcription.

It is found in the plastid. It localises to the chloroplast. The catalysed reaction is RNA(n) + a ribonucleoside 5'-triphosphate = RNA(n+1) + diphosphate. Its function is as follows. DNA-dependent RNA polymerase catalyzes the transcription of DNA into RNA using the four ribonucleoside triphosphates as substrates. The chain is DNA-directed RNA polymerase subunit beta from Lepidium virginicum (Virginia pepperweed).